We begin with the raw amino-acid sequence, 348 residues long: N-formyl peptide receptor 2 (348 aa).

Residue asparagine 1 is glycosylated (N-linked (GlcNAc...) asparagine). At 1–24 (NFSTPLSEYEEVSYESAGYTVLQI) the chain is on the extracellular side. Residues 25 to 47 (LPLVVLGVTFVLGVLGNGLVIWV) traverse the membrane as a helical segment. The Cytoplasmic segment spans residues 48 to 58 (AGFRMTRTVTT). The chain crosses the membrane as a helical span at residues 59–80 (ICYLNLALADFSFTATLPFLIV). Residues 81–97 (SMAMGEKWPFGWFLCKL) are Extracellular-facing. Residues cysteine 95 and cysteine 173 are joined by a disulfide bond. The helical transmembrane segment at 98 to 118 (IHIVVDINLFGSVFLIGFIAL) threads the bilayer. Over 119–137 (DRCICVLHPVWAQNHRTVS) the chain is Cytoplasmic. Residues 138–159 (LAMKVIVGPWILALVLTLPVFL) form a helical membrane-spanning segment. The Extracellular portion of the chain corresponds to 160 to 202 (FLTTVTIPNGDTYCTFNFASWGGTPEKRLKVAITMLTARGIIR). Residues 203–223 (FVIGFSMPMSIVATCYGLIAA) traverse the membrane as a helical segment. Residues 224–239 (KIHKKGMIKSSRPLRV) are Cytoplasmic-facing. Residues 240-263 (LTAVVASFFICWFPFQLVALLSTV) traverse the membrane as a helical segment. The Extracellular portion of the chain corresponds to 264 to 283 (WLKEILVDGKYKIINILVNP). A helical membrane pass occupies residues 284 to 303 (TSSLAFFNSCLNPMLYVFVG). The Cytoplasmic segment spans residues 304–348 (QDFRERLIHSLPTSLERALSEDSAPTNDTAASCASPPAETELQAM). Residues 322–348 (LSEDSAPTNDTAASCASPPAETELQAM) are disordered. Polar residues predominate over residues 326–335 (SAPTNDTAAS).

The protein belongs to the G-protein coupled receptor 1 family. In terms of assembly, interacts with APP; the interaction takes place at the cell surface and the complex is then rapidly internalized.

The protein localises to the cell membrane. Its function is as follows. Low affinity receptor for N-formyl-methionyl peptides, which are powerful neutrophil chemotactic factors. Binding of FMLP to the receptor causes activation of neutrophils. This response is mediated via a G-protein that activates a phosphatidylinositol-calcium second messenger system. Receptor for the chemokine-like protein FAM19A5, mediating FAM19A5-stimulated macrophage chemotaxis and the inhibitory effect on TNFSF11/RANKL-induced osteoclast differentiation. This chain is N-formyl peptide receptor 2 (FPR2), found in Macaca mulatta (Rhesus macaque).